A 205-amino-acid chain; its full sequence is Putative STAG3-like protein 1 (205 aa).

The SCD domain occupies 10–95; sequence PKVTCRDVLP…GRFKDWMVSM (86 aa).

Belongs to the SCC3 family.

The protein localises to the nucleus. The chain is Putative STAG3-like protein 1 (STAG3L1) from Homo sapiens (Human).